The chain runs to 1377 residues: DNA-directed RNA polymerase subunit beta (1377 aa).

The protein belongs to the RNA polymerase beta chain family. In terms of assembly, the RNAP catalytic core consists of 2 alpha, 1 beta, 1 beta' and 1 omega subunit. When a sigma factor is associated with the core the holoenzyme is formed, which can initiate transcription.

The catalysed reaction is RNA(n) + a ribonucleoside 5'-triphosphate = RNA(n+1) + diphosphate. DNA-dependent RNA polymerase catalyzes the transcription of DNA into RNA using the four ribonucleoside triphosphates as substrates. The sequence is that of DNA-directed RNA polymerase subunit beta from Aromatoleum aromaticum (strain DSM 19018 / LMG 30748 / EbN1) (Azoarcus sp. (strain EbN1)).